Reading from the N-terminus, the 859-residue chain is Volume-regulated anion channel subunit LRRC8D (859 aa).

The Cytoplasmic portion of the chain corresponds to 1–22; that stretch reads MFTLAEVASLNDIQPTYRILKP. Residues 23-48 form a helical membrane-spanning segment; sequence WWDVFMDYLAVVMLMVAIFAGTMQLT. The Extracellular portion of the chain corresponds to 49-164; it reads KDQVVCLPVL…YHLALPWYSK (116 aa). Cys54 and Cys355 are joined by a disulfide. The disordered stretch occupies residues 110-138; the sequence is IPLQATHPHAESTLPNQEAKKEKRDPTGR. Basic and acidic residues predominate over residues 127 to 138; sequence EAKKEKRDPTGR. The chain crosses the membrane as a helical span at residues 165–183; sequence YFPYLALIHTIILMVSSNF. At 184 to 309 the chain is on the cytoplasmic side; the sequence is WFKYPKTCSK…EDSDLIYKLY (126 aa). The disordered stretch occupies residues 222-252; sequence SEENKQRITGAQTLPKHVSTSSDEGSPSAST. Polar residues predominate over residues 228 to 252; it reads RITGAQTLPKHVSTSSDEGSPSAST. Residues Ser242, Ser243, and Ser247 each carry the phosphoserine modification. The helical transmembrane segment at 310 to 331 threads the bilayer; the sequence is VVQTLIKTAKFIFILCYTANFV. Over 332 to 361 the chain is Extracellular; it reads NAISFEHVCKPKVEHLTGYEVFECTHNMAY. A helical transmembrane segment spans residues 362–387; sequence MLKKLLISYISIICVYGFICLYTLFW. The Cytoplasmic segment spans residues 388–859; that stretch reads LFRIPLKEYS…DVNVPFANGI (472 aa). LRR repeat units lie at residues 515–535, 539–560, 562–583, 590–610, 613–633, 637–658, 660–681, 685–706, 708–729, 731–752, 754–775, 777–798, and 800–821; these read NLQE…AFSF, HLRC…VYLL, NLRE…IGLE, HLKI…ITDV, HLTK…NSLK, NVAE…IFSL, NLQE…ISFQ, RLTC…ITHV, NLES…VFSL, KLRC…IGLL, NLQH…LFKC, KLRT…ISQL, and QLTQ…LGQC.

The protein belongs to the LRRC8 family. Heterohexamer; oligomerizes with other LRRC8 proteins (LRRC8A, LRRC8B, LRRC8C and/or LRRC8E) to form a heterohexamer. In vivo, the subunit composition may depend primarily on expression levels, and heterooligomeric channels containing various proportions of the different LRRC8 proteins may coexist. In terms of tissue distribution, expressed in pancreatic beta cells. Also expressed in glucagon-secreting pancreatic alpha cells.

The protein resides in the cell membrane. The protein localises to the endoplasmic reticulum membrane. It carries out the reaction chloride(in) = chloride(out). It catalyses the reaction iodide(out) = iodide(in). The enzyme catalyses taurine(out) = taurine(in). In terms of biological role, non-essential component of the volume-regulated anion channel (VRAC, also named VSOAC channel), an anion channel required to maintain a constant cell volume in response to extracellular or intracellular osmotic changes. The VRAC channel conducts iodide better than chloride and can also conduct organic osmolytes like taurine. Plays a redundant role in the efflux of amino acids, such as aspartate, in response to osmotic stress family member (LRRC8B, LRRC8C, LRRC8D or LRRC8E); channel characteristics depend on the precise subunit composition. Also acts as a regulator of glucose-sensing in pancreatic beta cells: VRAC currents, generated in response to hypotonicity- or glucose-induced beta cell swelling, depolarize cells, thereby causing electrical excitation, leading to increase glucose sensitivity and insulin secretion. VRAC channels containing LRRC8D inhibit transport of immunoreactive cyclic dinucleotide GMP-AMP (2'-3'-cGAMP), an immune messenger produced in response to DNA virus in the cytosol. The protein is Volume-regulated anion channel subunit LRRC8D of Mus musculus (Mouse).